Here is a 206-residue protein sequence, read N- to C-terminus: Outer-membrane lipoprotein carrier protein (206 aa).

An N-terminal signal peptide occupies residues M1–A21.

The protein belongs to the LolA family. As to quaternary structure, monomer.

It localises to the periplasm. Functionally, participates in the translocation of lipoproteins from the inner membrane to the outer membrane. Only forms a complex with a lipoprotein if the residue after the N-terminal Cys is not an aspartate (The Asp acts as a targeting signal to indicate that the lipoprotein should stay in the inner membrane). The protein is Outer-membrane lipoprotein carrier protein of Shewanella sp. (strain MR-7).